A 332-amino-acid polypeptide reads, in one-letter code: Ferredoxin--NADP reductase (332 aa).

Residues Glu-36, Gln-44, Tyr-49, Val-91, Phe-124, and Thr-327 each coordinate FAD.

Belongs to the ferredoxin--NADP reductase type 2 family. Homodimer. Requires FAD as cofactor.

The enzyme catalyses 2 reduced [2Fe-2S]-[ferredoxin] + NADP(+) + H(+) = 2 oxidized [2Fe-2S]-[ferredoxin] + NADPH. This Streptococcus thermophilus (strain CNRZ 1066) protein is Ferredoxin--NADP reductase.